The sequence spans 429 residues: Light-independent protochlorophyllide reductase subunit N (429 aa).

[4Fe-4S] cluster is bound by residues Cys32, Cys57, and Cys118.

It belongs to the BchN/ChlN family. In terms of assembly, protochlorophyllide reductase is composed of three subunits; BchL, BchN and BchB. Forms a heterotetramer of two BchB and two BchN subunits. Requires [4Fe-4S] cluster as cofactor.

The enzyme catalyses chlorophyllide a + oxidized 2[4Fe-4S]-[ferredoxin] + 2 ADP + 2 phosphate = protochlorophyllide a + reduced 2[4Fe-4S]-[ferredoxin] + 2 ATP + 2 H2O. It functions in the pathway porphyrin-containing compound metabolism; bacteriochlorophyll biosynthesis (light-independent). Its function is as follows. Component of the dark-operative protochlorophyllide reductase (DPOR) that uses Mg-ATP and reduced ferredoxin to reduce ring D of protochlorophyllide (Pchlide) to form chlorophyllide a (Chlide). This reaction is light-independent. The NB-protein (BchN-BchB) is the catalytic component of the complex. In Rhodopseudomonas palustris (strain ATCC BAA-98 / CGA009), this protein is Light-independent protochlorophyllide reductase subunit N.